The following is a 228-amino-acid chain: Superoxide dismutase [Mn], mitochondrial (228 aa).

The N-terminal 24 residues, 1–24 (MALRNLMTKKPFAGILTFRQQLRC), are a transit peptide targeting the mitochondrion. Mn(2+) is bound by residues His52, His100, Asp189, and His193.

This sequence belongs to the iron/manganese superoxide dismutase family. Homotetramer. Mn(2+) serves as cofactor.

Its subcellular location is the mitochondrion matrix. The enzyme catalyses 2 superoxide + 2 H(+) = H2O2 + O2. Destroys superoxide anion radicals which are normally produced within the cells and which are toxic to biological systems. The chain is Superoxide dismutase [Mn], mitochondrial (SODA) from Capsicum annuum (Capsicum pepper).